The primary structure comprises 408 residues: Sex comb on midleg-like protein 4 (408 aa).

Phosphoserine occurs at positions 55 and 65. Residues 274 to 338 are disordered; that stretch reads AGGPATTTSG…TRRPSSRNPS (65 aa). Residues 278 to 287 are compositionally biased toward polar residues; the sequence is ATTTSGSRTN. Over residues 288–306 the composition is skewed to low complexity; it reads PVPSGGSSSPGLRLPASSP. Positions 340–406 constitute an SAM domain; the sequence is WTVEDVVRFV…CYHIDKLKQA (67 aa).

The protein belongs to the SCM family.

It is found in the nucleus. Putative Polycomb group (PcG) protein. PcG proteins act by forming multiprotein complexes, which are required to maintain the transcriptionally repressive state of homeotic genes throughout development. The sequence is that of Sex comb on midleg-like protein 4 (Scml4) from Mus musculus (Mouse).